A 140-amino-acid polypeptide reads, in one-letter code: uncharacterized protein (140 aa).

4 consecutive transmembrane segments (helical) span residues 4 to 24, 56 to 76, 84 to 104, and 109 to 129; these read LLLA…SFSG, EAFI…YLLW, SAAA…LFFS, and IRDV…YVLA.

The protein localises to the cell membrane. May be important for peptidoglycan remodeling. This is an uncharacterized protein from Bacillus subtilis (strain 168).